Consider the following 801-residue polypeptide: Probable methionine--tRNA ligase (801 aa).

A 'HIGH' region motif is present at residues 25 to 35 (PYVNNVPHLGN). Positions 347 to 351 (KFSKS) match the 'KMSKS' region motif. ATP is bound at residue Lys350. Residues 606 to 633 (DKLKGTKLSDGGQKKEQKKQSGGSKSKN) form a disordered region. A tRNA-binding domain is found at 639–742 (TVAKLDIRVG…ESAAVGERVT (104 aa)).

It belongs to the class-I aminoacyl-tRNA synthetase family.

Its subcellular location is the cytoplasm. The enzyme catalyses tRNA(Met) + L-methionine + ATP = L-methionyl-tRNA(Met) + AMP + diphosphate. This Oryza sativa subsp. japonica (Rice) protein is Probable methionine--tRNA ligase.